The following is a 573-amino-acid chain: NEDD4-binding protein 3-A (573 aa).

Disordered regions lie at residues 168 to 216 and 382 to 407; these read LNTM…INSL and LRGESEELRQKQSQSDNSGPKLEDSK. Composition is skewed to polar residues over residues 184 to 196 and 207 to 216; these read QPSNSHSNNQSES and DSRQNSINSL. Residues 289–539 are a coiled coil; sequence VEDVARQLEE…KEIQSSYREM (251 aa).

It belongs to the N4BP3 family.

The protein resides in the cytoplasmic vesicle. The protein localises to the cell projection. Its subcellular location is the axon. It is found in the dendrite. In terms of biological role, plays a role in axon and dendrite arborization during cranial nerve development. Also important for neural crest migration and early development of other anterior structures including eye, brain and cranial cartilage. The chain is NEDD4-binding protein 3-A from Xenopus laevis (African clawed frog).